Reading from the N-terminus, the 54-residue chain is U7-ctenitoxin-Pk1a (54 aa).

5 cysteine pairs are disulfide-bonded: C3-C17, C10-C23, C14-C52, C16-C37, and C25-C35.

In terms of tissue distribution, expressed by the venom gland.

It is found in the secreted. In terms of biological role, blocks voltage-gated sodium channels (Nav). Causes immediate spastic paralysis and death in mice within 1 minute of injection at dose levels of 1.5 ug per mouse. The chain is U7-ctenitoxin-Pk1a from Phoneutria keyserlingi (Brazilian wandering spider).